A 327-amino-acid polypeptide reads, in one-letter code: MTTLAQYLNTKATTPALNDVITTVTDVGKTISQLLRKGALADILGEAGNQNVQGEDQKKLDVLANDLLLDALAQNSHCAGVASEELDDATPANVDGSLLVLFDPLDGSSNIDINMAVGTIFSILPYQRQGQVSENSDFLQAGNQQLAAGYLLYGTSTVLTLTITDNVVMFSLDPDTNDYVLIEENVTIDADTSEYAINASNYRYWRAPMQQYIDELIAGETGVRGRDFNTRWVAAMVGDVHRILCRGGLFTYPFDTKYANKAGKLRLMYEANPMSLLIERASGGATDAVNRILDIEPIDIHQRVPVVLGSKNEVDYIKELHLNHTDK.

Residues Glu-84, Asp-103, Leu-105, and Asp-106 each coordinate Mg(2+). Residues Asp-106–Ser-109, Asn-198, and Lys-264 contribute to the substrate site. Mg(2+) is bound at residue Glu-270.

The protein belongs to the FBPase class 1 family. Homotetramer. Requires Mg(2+) as cofactor.

The protein resides in the cytoplasm. It catalyses the reaction beta-D-fructose 1,6-bisphosphate + H2O = beta-D-fructose 6-phosphate + phosphate. It functions in the pathway carbohydrate biosynthesis; gluconeogenesis. The chain is Fructose-1,6-bisphosphatase class 1 from Psychrobacter cryohalolentis (strain ATCC BAA-1226 / DSM 17306 / VKM B-2378 / K5).